The following is a 211-amino-acid chain: Redox-sensing transcriptional repressor Rex (211 aa).

The H-T-H motif DNA-binding region spans threonine 13–phenylalanine 52. Glycine 87–glycine 92 is a binding site for NAD(+).

It belongs to the transcriptional regulatory Rex family. Homodimer.

It localises to the cytoplasm. Its function is as follows. Modulates transcription in response to changes in cellular NADH/NAD(+) redox state. The polypeptide is Redox-sensing transcriptional repressor Rex (Thermus aquaticus).